The chain runs to 690 residues: NF-kappa-B-repressing factor (690 aa).

The interval 1 to 296 (MEKILHMAEG…FKHIIGEDLV (296 aa)) is active repression domain. A Nuclear localization signal motif is present at residues 25-45 (KPSKGQKRYLSTYDGQNPPKK). Disordered stretches follow at residues 27 to 49 (SKGQ…QAGS), 65 to 85 (SSSK…DVNG), and 133 to 160 (YFDS…PPSQ). A Glycyl lysine isopeptide (Lys-Gly) (interchain with G-Cter in SUMO2) cross-link involves residue Lys68. The span at 139-150 (PAPSSTSQQANC) shows a compositional bias: polar residues. The DNA-binding element occupies 296-388 (VVCQIGMLSY…RVFLQDHCLA (93 aa)). Residues 414–425 (PTYPSVKSSQCH) are compositionally biased toward polar residues. The disordered stretch occupies residues 414–436 (PTYPSVKSSQCHSGSSPKGSGKK). Residue Lys500 forms a Glycyl lysine isopeptide (Lys-Gly) (interchain with G-Cter in SUMO2) linkage. The 46-residue stretch at 551 to 596 (EDNIGNQLLRKMGWTGGGLGKSGEGIREPISVKEQHKREGLGLDVE) folds into the G-patch domain. The region spanning 600–664 (KIAKRDIEQI…DRYLVVGRKR (65 aa)) is the R3H domain. A Phosphoserine modification is found at Ser618. Glycyl lysine isopeptide (Lys-Gly) (interchain with G-Cter in SUMO2) cross-links involve residues Lys666 and Lys674.

In terms of assembly, interacts with NF-kappa-B. Interacts with XRN2. Interacts (via G-patch domain) with DHX15; promoting the RNA helicase activity of DHX15.

The protein resides in the nucleus. The protein localises to the nucleolus. Enhances the ATPase activity of DHX15 by acting like a brace that tethers mobile sections of DHX15 together, stabilizing a functional conformation with high RNA affinity of DHX15. Involved in the constitutive silencing of the interferon beta promoter, independently of the virus-induced signals, and in the inhibition of the basal and cytokine-induced iNOS promoter activity. Also involved in the regulation of IL-8 transcription. May also act as a DNA-binding transcription regulator: interacts with a specific negative regulatory element (NRE) 5'-AATTCCTCTGA-3' to mediate transcriptional repression of certain NK-kappa-B responsive genes. This is NF-kappa-B-repressing factor (Nkrf) from Mus musculus (Mouse).